A 684-amino-acid chain; its full sequence is Soluble guanylate cyclase gcy-32 (684 aa).

Position 105 (histidine 105) interacts with heme. Residues 396 to 432 (DVEVNLQLEANNEQLETMTRELELERQKTDSILKDML) are a coiled coil. Positions 454 to 582 (TVMFCDLPAF…ETVTLASQME (129 aa)) constitute a Guanylate cyclase domain. Residues aspartate 459 and aspartate 503 each contribute to the Mg(2+) site.

It belongs to the adenylyl cyclase class-4/guanylyl cyclase family. As to quaternary structure, heterodimer; with other soluble guanylate cyclases. The cofactor is heme. As to expression, expressed in a small number of neurons, corresponding to URX, AQR and PQR neurons.

Its subcellular location is the cytoplasm. The enzyme catalyses GTP = 3',5'-cyclic GMP + diphosphate. Its activity is regulated as follows. May be regulated by molecular oxygen. Probably not activated by nitric oxide (NO). Its function is as follows. Synthesizes cyclic GMP (cGMP) from GTP. Influences aerotaxis responses, aggregation and bordering behaviors (gathering around the edge of a bacterial lawn) in combination with other soluble guanylate cyclases. In Caenorhabditis elegans, this protein is Soluble guanylate cyclase gcy-32 (gcy-32).